A 234-amino-acid polypeptide reads, in one-letter code: Urease accessory protein UreF (234 aa).

The protein belongs to the UreF family. As to quaternary structure, ureD, UreF and UreG form a complex that acts as a GTP-hydrolysis-dependent molecular chaperone, activating the urease apoprotein by helping to assemble the nickel containing metallocenter of UreC. The UreE protein probably delivers the nickel.

The protein localises to the cytoplasm. Functionally, required for maturation of urease via the functional incorporation of the urease nickel metallocenter. In Azoarcus sp. (strain BH72), this protein is Urease accessory protein UreF.